The primary structure comprises 256 residues: Hydroxyacylglutathione hydrolase (256 aa).

Zn(2+)-binding residues include His57, His59, Asp61, His62, His115, Asp134, and His172.

This sequence belongs to the metallo-beta-lactamase superfamily. Glyoxalase II family. As to quaternary structure, monomer. The cofactor is Zn(2+).

The enzyme catalyses an S-(2-hydroxyacyl)glutathione + H2O = a 2-hydroxy carboxylate + glutathione + H(+). It functions in the pathway secondary metabolite metabolism; methylglyoxal degradation; (R)-lactate from methylglyoxal: step 2/2. In terms of biological role, thiolesterase that catalyzes the hydrolysis of S-D-lactoyl-glutathione to form glutathione and D-lactic acid. This is Hydroxyacylglutathione hydrolase from Jannaschia sp. (strain CCS1).